A 917-amino-acid chain; its full sequence is Interleukin-6 receptor subunit beta (917 aa).

A signal peptide spans 1–22 (MSAPRIWLAQALLFFLTTESIG). The Extracellular portion of the chain corresponds to 23–617 (QLLEPCGYIY…TPKFAQGEIE (595 aa)). The 95-residue stretch at 26–120 (EPCGYIYPEF…IEQNVYGVTM (95 aa)) folds into the Ig-like C2-type domain. Cystine bridges form between C28-C54 and C48-C103. N-linked (GlcNAc...) asparagine glycosylation is found at N43, N61, N83, and N131. Fibronectin type-III domains follow at residues 128-221 (KPTN…VKPT), 222-322 (PPYN…TYED), 327-417 (PPSF…IPSP), 422-515 (AYSV…LKQA), and 517-611 (PARG…TPKF). C134 and C144 form a disulfide bridge. Residue N157 is glycosylated (N-linked (GlcNAc...) asparagine). A disulfide bridge links C172 with C180. N225 carries an N-linked (GlcNAc...) asparagine glycan. Positions 308-312 (WSDWS) match the WSXWS motif motif. The N-linked (GlcNAc...) asparagine glycan is linked to N388. C456 and C464 are oxidised to a cystine. N-linked (GlcNAc...) asparagine glycosylation is found at N476 and N551. A helical membrane pass occupies residues 618 to 639 (AIVVPVCLAFLLTTLLGVLFCF). Topologically, residues 640-917 (NKRDLIKKHI…TVRQGGYMPQ (278 aa)) are cytoplasmic. The Box 1 motif motif lies at 649-657 (IWPNVPDPS). Disordered regions lie at residues 658-678 (KSHI…NSKD) and 719-754 (TEGH…TAST). Phosphoserine is present on residues S659 and S665. A compositionally biased stretch (low complexity) spans 729 to 753 (SSCMSSSRPSISSNEENESAQSTAS). 4 positions are modified to phosphoserine: S780, S787, S827, and S837. The interval 898 to 917 (EEIPKSYLPQTVRQGGYMPQ) is disordered.

This sequence belongs to the type I cytokine receptor family. Type 2 subfamily. Component of a hexamer of two molecules each of IL6, IL6R and IL6ST; associates with the complex IL6:IL6R but does not interact with IL6. Forms heterodimers composed of LIFR and IL6ST (type I OSM receptor) which are activated by LIF and OSM. Also forms heterodimers composed of OSMR and IL6ST (type II receptor) which are activated by OSM but not by LIF. Interacts with HCK. Interacts with INPP5D/SHIP1. Interacts with SRC and YES. Interacts with ARMH4; this interaction prevents IL6ST protein homodimerization and bridges ARMH4 with IL6R and STAT3 and therefore inhibits phosphorylation of STAT3 at 'Tyr-705'. In terms of processing, phosphorylation of Ser-780 down-regulates cell surface expression. Post-translationally, heavily N-glycosylated. Glycosylation is required for protein stability and localization in plasma membrane but not for ligand binding. As to expression, expression not restricted to IL6-responsive cells. Found in tissues such as brain, heart, thymus, spleen, kidney, lung and liver. Found in all the cell lines tested except BaF-B03. Expressed paraventricular nucleus of the hypothalamus.

Its subcellular location is the cell membrane. Its function is as follows. Signal-transducing molecule. The receptor systems for IL6, LIF, OSM, CNTF, IL11, CTF1 and BSF3 can utilize IL6ST for initiating signal transmission. Binding of IL6 to IL6R induces IL6ST homodimerization and formation of a high-affinity receptor complex, which activates the intracellular JAK-MAPK and JAK-STAT3 signaling pathways. That causes phosphorylation of IL6ST tyrosine residues which in turn activates STAT3. In parallel, the IL6 signaling pathway induces the expression of two cytokine receptor signaling inhibitors, SOCS1 and SOCS3, which inhibit JAK and terminate the activity of the IL6 signaling pathway as a negative feedback loop. Also activates the yes-associated protein 1 (YAP) and NOTCH pathways to control inflammation-induced epithelial regeneration, independently of STAT3. Mediates signals which regulate immune response, hematopoiesis, pain control and bone metabolism. Has a role in embryonic development. Essential for survival of motor and sensory neurons and for differentiation of astrocytes. Required for expression of TRPA1 in nociceptive neurons. Required for the maintenance of PTH1R expression in the osteoblast lineage and for the stimulation of PTH-induced osteoblast differentiation. Required for normal trabecular bone mass and cortical bone composition. The sequence is that of Interleukin-6 receptor subunit beta from Mus musculus (Mouse).